The following is a 184-amino-acid chain: MIHHDSSKMYGTTILSIRRDKNVVVIGDGQVSLGHTVIKSGARKVRRLSGDSVIAGFAGATADAFTLFERLESKLDKHPGQLMRACVELAKDWRMDKYLRKLEAMMIVADKSISLVITGTGDVLEPEDGIAAIGSGGNFALSAAKALIDVEGISIEEIAKKAMKIAADICVYTNHNLIIEKIEE.

Residue threonine 12 is part of the active site. Na(+) contacts are provided by alanine 167, cysteine 170, and threonine 173.

Belongs to the peptidase T1B family. HslV subfamily. In terms of assembly, a double ring-shaped homohexamer of HslV is capped on each side by a ring-shaped HslU homohexamer. The assembly of the HslU/HslV complex is dependent on binding of ATP.

Its subcellular location is the cytoplasm. It carries out the reaction ATP-dependent cleavage of peptide bonds with broad specificity.. Allosterically activated by HslU binding. In terms of biological role, protease subunit of a proteasome-like degradation complex believed to be a general protein degrading machinery. The chain is ATP-dependent protease subunit HslV from Wolbachia pipientis subsp. Culex pipiens (strain wPip).